A 188-amino-acid chain; its full sequence is Trafficking protein particle complex subunit 5 (188 aa).

Ser-10 carries the post-translational modification Phosphoserine.

This sequence belongs to the TRAPP small subunits family. BET3 subfamily. Component of the multisubunit TRAPP (transport protein particle) complex, which includes at least TRAPPC2, TRAPPC2L, TRAPPC3, TRAPPC3L, TRAPPC4, TRAPPC5, TRAPPC8, TRAPPC9, TRAPPC10, TRAPPC11 and TRAPPC12.

The protein localises to the golgi apparatus. It is found in the cis-Golgi network. The protein resides in the endoplasmic reticulum. May play a role in vesicular transport from endoplasmic reticulum to Golgi. The polypeptide is Trafficking protein particle complex subunit 5 (Trappc5) (Mus musculus (Mouse)).